A 548-amino-acid polypeptide reads, in one-letter code: Nonribosomal peptide synthetase 8 (548 aa).

The 77-residue stretch at 1 to 77 (MNSLDQWRDT…QLRGENRSGP (77 aa)) folds into the Carrier domain. O-(pantetheine 4'-phosphoryl)serine is present on Ser-35. The interval 122 to 537 (MAPISSIQEF…FKSLIAELAA (416 aa)) is condensation.

It belongs to the NRP synthetase family.

Its pathway is mycotoxin biosynthesis. In terms of biological role, nonribosomal peptide synthetase; part of the gene cluster that mediates the biosynthesis of fumonisins B1 (FB1), B2 (FB2), B3 (FB3), and B4 (FB4), which are carcinogenic mycotoxins. Within the pathway FUM14 catalyzes esterification of CoA-activated tricarballylic acid to the C-14 and C-15 hydroxyls of the fumonisin backbone. The biosynthesis starts with the FUM1-catalyzed carbon chain assembly from one molecule of acetyl-CoA, eight molecules of malonyl-CoA, and two molecules of methionine (in S-adenosyl form). The C18 polyketide chain is released from the enzyme by a nucleophilic attack of a carbanion, which is derived from R-carbon of alanine by decarboxylation, on the carbonyl carbon of polyketide acyl chain. This step is catalyzed by the pyridoxal 5'-phosphate-dependent aminoacyl transferase FUM8. The resultant 3-keto intermediate is then stereospecifically reduced to a 3-hydroxyl product by reductase FUM13. Subsequent oxidations at C-10 by the cytochrome P450 monooxygenase FUM2, C-14 and C-15 by FUM6, FUM12 or FUM15, tricarballylic esterification of the hydroxyl groups on C-14 and C-15 by acyltransferase FUM14, and C-5 hydroxylation by 2-keto-glutarate-dependent dioxygenase FUM3 furnish the biosynthesis of fumonisins. The tricarballylic moieties are most likely derived from the citric acid cycle, and their addition to the carbon backbone may involve FUM7, FUM10, FUM11 and FUM14. The sequence is that of Nonribosomal peptide synthetase 8 from Gibberella moniliformis (strain M3125 / FGSC 7600) (Maize ear and stalk rot fungus).